The chain runs to 264 residues: Ribosomal protein L11 methyltransferase (264 aa).

4 residues coordinate S-adenosyl-L-methionine: Thr116, Gly137, Asp159, and Asn200.

Belongs to the methyltransferase superfamily. PrmA family.

Its subcellular location is the cytoplasm. It carries out the reaction L-lysyl-[protein] + 3 S-adenosyl-L-methionine = N(6),N(6),N(6)-trimethyl-L-lysyl-[protein] + 3 S-adenosyl-L-homocysteine + 3 H(+). In terms of biological role, methylates ribosomal protein L11. The polypeptide is Ribosomal protein L11 methyltransferase (Thermotoga neapolitana).